The following is a 349-amino-acid chain: MQPFTEFCTLTKAITSASNDFFINQTRLTCDICKELVSFDCEDKVVASLAAVRSDIPIEVTERKDLNLLDLIQFFEKKIEFTTLIDELFTAHKDHCQKNGKPCTMLSIIAGRYTDELYREESIEENRSWVLKAYKLDLINQQFFRNNRLYDILKEAGVENLERIMLEDEIESVCKTKAKSPEEVITKMIPEQLTKLLELMSCPQKQVTVYIRGSGYTPVNHAKLNACLKDRDIQLYLGMPMSYFRYSSWESYYEGNGMCLKSEHELKHNVAKVYAAVKKVAPKVKLLAWTLEANDEMRTCSCMVKQHDMAIAAIRGELYVPPELRPVPVRLGKRRASSGDVSDIPMKRN.

This is an uncharacterized protein from Ostreid herpesvirus 1 (isolate France) (OsHV-1).